Consider the following 170-residue polypeptide: Protein SprT (170 aa).

Residues 22-163 (LQQANLTLQT…RCRRCGKTLR (142 aa)) form the SprT-like domain. Zn(2+) is bound at residue His78. Glu79 is an active-site residue. His82 is a Zn(2+) binding site.

This sequence belongs to the SprT family. The cofactor is Zn(2+).

The protein localises to the cytoplasm. This Pectobacterium atrosepticum (strain SCRI 1043 / ATCC BAA-672) (Erwinia carotovora subsp. atroseptica) protein is Protein SprT.